A 935-amino-acid chain; its full sequence is Peptidyl-glycine alpha-amidating monooxygenase A (935 aa).

Positions methionine 1–threonine 36 are cleaved as a signal peptide. The tract at residues methionine 1–glutamine 390 is peptidylglycine alpha-hydroxylating monooxygenase. The Intragranular segment spans residues arginine 37–phenylalanine 825. Intrachain disulfides connect cysteine 43–cysteine 182, cysteine 77–cysteine 122, cysteine 110–cysteine 127, cysteine 223–cysteine 330, and cysteine 289–cysteine 311. The Cu(2+) site is built by histidine 103 and histidine 104. 4 residues coordinate Cu(2+): histidine 168, histidine 238, histidine 240, and methionine 310. Residues histidine 362–glutamate 385 form a disordered region. The segment at aspartate 391–valine 712 is peptidyl-alpha-hydroxyglycine alpha-amidating lyase. Arginine 426 is an a protein binding site. NHL repeat units lie at residues serine 463 to glycine 504, leucine 512 to asparagine 557, and glycine 565 to glutamate 609. 2 disulfides stabilise this stretch: cysteine 526-cysteine 547 and cysteine 594-cysteine 605. A protein-binding residues include tyrosine 546 and arginine 598. The N-linked (GlcNAc...) asparagine glycan is linked to asparagine 658. Residues glycine 662–serine 705 form an NHL 4 repeat. A compositionally biased stretch (basic and acidic residues) spans phenylalanine 728 to glutamine 751. 2 disordered regions span residues phenylalanine 728–lysine 764 and glutamine 778–lysine 812. N-linked (GlcNAc...) asparagine glycosylation occurs at asparagine 739. Residues asparagine 755–lysine 764 show a composition bias toward polar residues. Residues valine 826–isoleucine 846 form a helical membrane-spanning segment. The Cytoplasmic portion of the chain corresponds to arginine 847–serine 935. Residues lysine 896–serine 935 are disordered. Positions glutamate 909 to tyrosine 922 are enriched in acidic residues. Over residues proline 925 to serine 935 the composition is skewed to pro residues.

It in the C-terminal section; belongs to the peptidyl-alpha-hydroxyglycine alpha-amidating lyase family. In the N-terminal section; belongs to the copper type II ascorbate-dependent monooxygenase family. Monomer. Requires Zn(2+) as cofactor. It depends on Cu(2+) as a cofactor.

The protein resides in the cytoplasmic vesicle. It localises to the secretory vesicle membrane. The catalysed reaction is a [peptide]-C-terminal glycine + 2 L-ascorbate + O2 = a [peptide]-C-terminal (2S)-2-hydroxyglycine + 2 monodehydro-L-ascorbate radical + H2O. The enzyme catalyses a [peptide]-C-terminal (2S)-2-hydroxyglycine = a [peptide]-C-terminal amide + glyoxylate. Its function is as follows. Bifunctional enzyme that catalyzes amidation of the C-terminus of proteins. Alpha-amidation is present at the C-terminus of many endocrine hormones and neuropeptides and is required for their activity. C-terminal amidation also takes place in response to protein fragmentation triggered by oxidative stress, promoting degradation of amidated protein fragments by the proteasome. Alpha-amidation involves two sequential reactions, both of which are catalyzed by separate catalytic domains of the enzyme. The first step, catalyzed by peptidyl alpha-hydroxylating monooxygenase (PHM) domain, is the copper-, ascorbate-, and O2- dependent stereospecific hydroxylation (with S stereochemistry) at the alpha-carbon (C-alpha) of the C-terminal glycine of the peptidylglycine substrate. The second step, catalyzed by the peptidylglycine amidoglycolate lyase (PAL) domain, is the zinc-dependent cleavage of the N-C-alpha bond, producing the alpha-amidated peptide and glyoxylate. This is Peptidyl-glycine alpha-amidating monooxygenase A (pam-a) from Xenopus laevis (African clawed frog).